The sequence spans 331 residues: N-arachidonyl glycine receptor (331 aa).

Over 1-26 the chain is Extracellular; sequence MITLNNQDQPVPFNSSHPDEYKIAAL. An N-linked (GlcNAc...) asparagine glycan is attached at Asn-14. A helical transmembrane segment spans residues 27 to 47; the sequence is VFYSCIFIIGLFVNITALWVF. At 48-56 the chain is on the cytoplasmic side; that stretch reads SCTTKKRTT. The chain crosses the membrane as a helical span at residues 57–77; it reads VTIYMMNVALVDLIFIMTLPF. Residues 78-95 are Extracellular-facing; the sequence is RMFYYAKDEWPFGEYFCQ. The cysteines at positions 94 and 172 are disulfide-linked. Residues 96 to 116 form a helical membrane-spanning segment; sequence ILGALTVFYPSIALWLLAFIS. At 117–138 the chain is on the cytoplasmic side; the sequence is ADRYMAIVQPKYAKELKNTCKA. Residues 139–159 traverse the membrane as a helical segment; the sequence is VLACVGVWIMTLTTTTPLLLL. Topologically, residues 160 to 191 are extracellular; the sequence is YKDPDKDSTPATCLKISDIIYLKAVNVLNLTR. Residues 192 to 212 traverse the membrane as a helical segment; it reads LTFFFLIPLFIMIGCYLVIIH. Residues 213–232 are Cytoplasmic-facing; that stretch reads NLLHGRTSKLKPKVKEKSIR. Residues 233-253 traverse the membrane as a helical segment; the sequence is IIITLLVQVLVCFMPFHICFA. The Extracellular segment spans residues 254–268; sequence FLMLGTGENSYNPWG. A helical membrane pass occupies residues 269-289; it reads AFTTFLMNLSTCLDVILYYIV. Residues 290–331 lie on the Cytoplasmic side of the membrane; sequence SKQFQARVISVMLYRNYLRSMRRKSFRSGSLRSLSNINSEML. Ser-322 bears the Phosphoserine mark.

This sequence belongs to the G-protein coupled receptor 1 family. As to expression, expressed in midpiece of spermatozoon (at protein level). Most abundant in testis and spleen. Highly expressed in CD4 and CD8-positive T-cells as well as CD19-positive B-cells.

The protein localises to the cell membrane. It localises to the cytoplasmic vesicle membrane. Its function is as follows. G protein-coupled receptor (GPCR) that plays a role in diverse physiological processes particularly within the immune and nervous systems. Becomes active when triggered by various endogenous ligands including endocannabinoid N-arachidonyl glycine (NAGly), delta-9-tetrahydrocannabinol or resolvin D2/RvD2 derived from the omega-3 fatty acid docosahexaenoic acid (DHA). Upon RvD2 binding, facilitates the resolution of inflammation, aiding in tissue repair and homeostasis. Mechanistically, RvD2 ligation initiates Galphas protein coupling, activation of cAMP-PKA signaling pathway and phosphorylation of STAT3, leading to RvD2-stimulated macrophage phagocytosis. Mediates NAGly-induced process of reorganization of actin filaments and induction of acrosomal exocytosis. Activation by N-arachidonoyl glycine (NAGly) can also induce apoptosis in macrophages. Plays a role in homeostasis of CD8+ subsets of intraepithelial lymphocytes (IELs) (CD8alphaalpha and CD8alphabeta IELs) in small intestine by supporting preferential migration of CD8alphaalpha T-cells to intraepithelial compartment over lamina propria compartment, and by mediating their reconstitution into small intestine after bone marrow transplant. Also participates in hypotensive responses, mediating reduction in intraocular and blood pressure. This Homo sapiens (Human) protein is N-arachidonyl glycine receptor (GPR18).